The primary structure comprises 553 residues: CTP synthase (553 aa).

The segment at 1 to 270 is amidoligase domain; the sequence is MTKYVFVTGG…DELICEELKL (270 aa). A CTP-binding site is contributed by S13. S13 is a binding site for UTP. ATP is bound by residues 14-19 and D71; that span reads SLGKGI. The Mg(2+) site is built by D71 and E144. Residues 151-153, 191-196, and K227 each bind CTP; these read DIE and KTKPTQ. UTP contacts are provided by residues 191 to 196 and K227; that span reads KTKPTQ. A Glutamine amidotransferase type-1 domain is found at 295 to 547; it reads TIGMVGKYVE…VEAARAHHEA (253 aa). Residue G356 coordinates L-glutamine. C383 serves as the catalytic Nucleophile; for glutamine hydrolysis. Residues 384-387, E407, and R473 each bind L-glutamine; that span reads LGMQ. Active-site residues include H520 and E522.

It belongs to the CTP synthase family. Homotetramer.

The enzyme catalyses UTP + L-glutamine + ATP + H2O = CTP + L-glutamate + ADP + phosphate + 2 H(+). The catalysed reaction is L-glutamine + H2O = L-glutamate + NH4(+). It carries out the reaction UTP + NH4(+) + ATP = CTP + ADP + phosphate + 2 H(+). It participates in pyrimidine metabolism; CTP biosynthesis via de novo pathway; CTP from UDP: step 2/2. Allosterically activated by GTP, when glutamine is the substrate; GTP has no effect on the reaction when ammonia is the substrate. The allosteric effector GTP functions by stabilizing the protein conformation that binds the tetrahedral intermediate(s) formed during glutamine hydrolysis. Inhibited by the product CTP, via allosteric rather than competitive inhibition. Catalyzes the ATP-dependent amination of UTP to CTP with either L-glutamine or ammonia as the source of nitrogen. Regulates intracellular CTP levels through interactions with the four ribonucleotide triphosphates. The chain is CTP synthase from Paraburkholderia phymatum (strain DSM 17167 / CIP 108236 / LMG 21445 / STM815) (Burkholderia phymatum).